The chain runs to 453 residues: ACT domain-containing protein ACR3 (453 aa).

ACT domains follow at residues 37-112 (LVKV…SASQ), 130-212 (SIEI…KFAR), 266-341 (VINV…RVSE), and 344-423 (SLEL…VPSR).

As to expression, expressed in roots, cotyledons, rosette and cauline leaves, sepals, style, and pedicels and tips of young developing siliques.

Its function is as follows. May bind amino acids. In Arabidopsis thaliana (Mouse-ear cress), this protein is ACT domain-containing protein ACR3.